A 73-amino-acid polypeptide reads, in one-letter code: Cytochrome b559 subunit alpha (73 aa).

A helical membrane pass occupies residues 21–35 (IIHSITVPSLFIAGW). H23 contacts heme.

The protein belongs to the PsbE/PsbF family. Heterodimer of an alpha subunit and a beta subunit. PSII is composed of 1 copy each of membrane proteins PsbA, PsbB, PsbC, PsbD, PsbE, PsbF, PsbH, PsbI, PsbJ, PsbK, PsbL, PsbM, PsbT, PsbY, PsbZ, Psb30/Ycf12, at least 3 peripheral proteins of the oxygen-evolving complex and a large number of cofactors. It forms dimeric complexes. It depends on heme b as a cofactor.

Its subcellular location is the plastid. The protein localises to the chloroplast thylakoid membrane. This b-type cytochrome is tightly associated with the reaction center of photosystem II (PSII). PSII is a light-driven water:plastoquinone oxidoreductase that uses light energy to abstract electrons from H(2)O, generating O(2) and a proton gradient subsequently used for ATP formation. It consists of a core antenna complex that captures photons, and an electron transfer chain that converts photonic excitation into a charge separation. This is Cytochrome b559 subunit alpha from Bigelowiella natans (Pedinomonas minutissima).